We begin with the raw amino-acid sequence, 1401 residues long: DNA-directed RNA polymerase subunit beta' (1401 aa).

C70, C72, C85, and C88 together coordinate Zn(2+). D460, D462, and D464 together coordinate Mg(2+). Zn(2+) contacts are provided by C808, C882, C889, and C892.

The protein belongs to the RNA polymerase beta' chain family. The RNAP catalytic core consists of 2 alpha, 1 beta, 1 beta' and 1 omega subunit. When a sigma factor is associated with the core the holoenzyme is formed, which can initiate transcription. Requires Mg(2+) as cofactor. It depends on Zn(2+) as a cofactor.

It catalyses the reaction RNA(n) + a ribonucleoside 5'-triphosphate = RNA(n+1) + diphosphate. DNA-dependent RNA polymerase catalyzes the transcription of DNA into RNA using the four ribonucleoside triphosphates as substrates. The polypeptide is DNA-directed RNA polymerase subunit beta' (Legionella pneumophila (strain Lens)).